We begin with the raw amino-acid sequence, 278 residues long: Pantothenate synthetase (278 aa).

Residue Met26 to His33 coordinates ATP. Catalysis depends on His33, which acts as the Proton donor. Residue Gln57 coordinates (R)-pantoate. Residue Gln57 coordinates beta-alanine. Gly144–Asp147 provides a ligand contact to ATP. Gln150 lines the (R)-pantoate pocket. Residues Gly173 and Leu181 to Arg184 contribute to the ATP site.

The protein belongs to the pantothenate synthetase family. As to quaternary structure, homodimer.

It localises to the cytoplasm. The enzyme catalyses (R)-pantoate + beta-alanine + ATP = (R)-pantothenate + AMP + diphosphate + H(+). The protein operates within cofactor biosynthesis; (R)-pantothenate biosynthesis; (R)-pantothenate from (R)-pantoate and beta-alanine: step 1/1. Catalyzes the condensation of pantoate with beta-alanine in an ATP-dependent reaction via a pantoyl-adenylate intermediate. This is Pantothenate synthetase from Neisseria meningitidis serogroup B (strain ATCC BAA-335 / MC58).